Here is a 327-residue protein sequence, read N- to C-terminus: Transaldolase (327 aa).

Residue Lys132 is the Schiff-base intermediate with substrate of the active site.

The protein belongs to the transaldolase family. Type 1 subfamily. In terms of assembly, homodimer.

The protein resides in the cytoplasm. The catalysed reaction is D-sedoheptulose 7-phosphate + D-glyceraldehyde 3-phosphate = D-erythrose 4-phosphate + beta-D-fructose 6-phosphate. The protein operates within carbohydrate degradation; pentose phosphate pathway; D-glyceraldehyde 3-phosphate and beta-D-fructose 6-phosphate from D-ribose 5-phosphate and D-xylulose 5-phosphate (non-oxidative stage): step 2/3. In terms of biological role, transaldolase is important for the balance of metabolites in the pentose-phosphate pathway. The polypeptide is Transaldolase (Chlamydia felis (strain Fe/C-56) (Chlamydophila felis)).